A 418-amino-acid chain; its full sequence is Thermolabile hemolysin (418 aa).

Positions 1–19 (MMKKTITLLTALLPLASAV) are cleaved as a signal peptide. Serine 153 (nucleophile) is an active-site residue. Residues aspartate 390 and histidine 393 contribute to the active site.

The protein belongs to the 'GDSL' lipolytic enzyme family. Post-translationally, there are two forms of LDH. The LDH(S) may be a protein in which 13 residues of the N-terminal of LDH(L) are deleted.

It is found in the secreted. Its function is as follows. Phospholipase hydrolyzing both fatty acid esters of phospholipid, i.e. it hydrolyzes phosphatidylcholine (PC) to lysophosphatidylcholine (LPC) and then LPC to glycerophosphorylcholine (GPC). The polypeptide is Thermolabile hemolysin (Vibrio parahaemolyticus serotype O3:K6 (strain RIMD 2210633)).